A 187-amino-acid chain; its full sequence is Peptidyl-tRNA hydrolase (187 aa).

Residue Tyr15 coordinates tRNA. His20 functions as the Proton acceptor in the catalytic mechanism. Tyr64, Asn66, and Asn112 together coordinate tRNA.

The protein belongs to the PTH family. Monomer.

Its subcellular location is the cytoplasm. It catalyses the reaction an N-acyl-L-alpha-aminoacyl-tRNA + H2O = an N-acyl-L-amino acid + a tRNA + H(+). Hydrolyzes ribosome-free peptidyl-tRNAs (with 1 or more amino acids incorporated), which drop off the ribosome during protein synthesis, or as a result of ribosome stalling. In terms of biological role, catalyzes the release of premature peptidyl moieties from peptidyl-tRNA molecules trapped in stalled 50S ribosomal subunits, and thus maintains levels of free tRNAs and 50S ribosomes. This chain is Peptidyl-tRNA hydrolase, found in Phocaeicola vulgatus (strain ATCC 8482 / DSM 1447 / JCM 5826 / CCUG 4940 / NBRC 14291 / NCTC 11154) (Bacteroides vulgatus).